The chain runs to 261 residues: Carbonic anhydrase 1 (261 aa).

At Ala2 the chain carries N-acetylalanine. Positions 4-261 (PDWGYDGENG…LKGRTVKASF (258 aa)) constitute an Alpha-carbonic anhydrase domain. The tract at residues 22 to 41 (PIANGNNQSPIDIKTSETKR) is disordered. The active-site Proton donor/acceptor is His65. Residues His95, His97, and His120 each coordinate Zn(2+). Substrate-binding positions include Thr200 and 200-201 (TH).

Belongs to the alpha-carbonic anhydrase family. The cofactor is Zn(2+).

The protein localises to the cytoplasm. It catalyses the reaction hydrogencarbonate + H(+) = CO2 + H2O. The catalysed reaction is urea = cyanamide + H2O. Inhibited by acetazolamide. Functionally, catalyzes the reversible hydration of carbon dioxide. Can hydrate cyanamide to urea. This is Carbonic anhydrase 1 (CA1) from Ovis aries (Sheep).